A 753-amino-acid polypeptide reads, in one-letter code: Probable dipeptidyl peptidase 4 (753 aa).

An N-terminal signal peptide occupies residues 1 to 18; it reads MKTSQFLSLLLLAGIAQA. Asn-84, Asn-114, and Asn-222 each carry an N-linked (GlcNAc...) asparagine glycan. Catalysis depends on charge relay system residues Ser-616, Asp-668, and His-703.

Belongs to the peptidase S9B family.

It is found in the secreted. It catalyses the reaction Release of an N-terminal dipeptide, Xaa-Yaa-|-Zaa-, from a polypeptide, preferentially when Yaa is Pro, provided Zaa is neither Pro nor hydroxyproline.. Functionally, extracellular dipeptidyl-peptidase which removes N-terminal dipeptides sequentially from polypeptides having unsubstituted N-termini provided that the penultimate residue is proline. Contributes to pathogenicity. The chain is Probable dipeptidyl peptidase 4 (DPP4) from Trichophyton verrucosum (strain HKI 0517).